The chain runs to 407 residues: Cathepsin D (407 aa).

Residues 1-20 form the signal peptide; that stretch reads MQTPGVLLLILGLLDASSSA. The propeptide at 21 to 64 is activation peptide; it reads LIRIPLRKFTSIRRTMTEVGGSVEDLILKGPITKYSMQSSPRTK. The region spanning 79-402 is the Peptidase A1 domain; sequence YYGEIGIGTP…DREYNRVGFA (324 aa). 2 disulfide bridges follow: Cys91–Cys160 and Cys110–Cys117. Asp97 is an active-site residue. Asn134 and Asn258 each carry an N-linked (GlcNAc...) asparagine glycan. Cysteines 281 and 285 form a disulfide. Asp290 is an active-site residue. Cys324 and Cys361 are oxidised to a cystine.

It belongs to the peptidase A1 family. In terms of assembly, occurs as a mixture of both a single chain form and two types of two chain (light and heavy) forms. Interacts with ADAM30; this leads to activation of CTSD. Post-translationally, N- and O-glycosylated. In terms of processing, undergoes proteolytic cleavage and activation by ADAM30.

The protein resides in the lysosome. It localises to the melanosome. It is found in the secreted. The protein localises to the extracellular space. The enzyme catalyses Specificity similar to, but narrower than, that of pepsin A. Does not cleave the 4-Gln-|-His-5 bond in B chain of insulin.. Its function is as follows. Acid protease active in intracellular protein breakdown. Plays a role in APP processing following cleavage and activation by ADAM30 which leads to APP degradation. The sequence is that of Cathepsin D (Ctsd) from Rattus norvegicus (Rat).